A 497-amino-acid chain; its full sequence is MSAKFDISFANSASLENALAIVLQASGEAQAVAGASEADPGGVIERASKISGFSAKSMATLDVIAPQGSSADRLLVIGLGKPSKLVAHDWLRAGGTAAAHFKKADKVVIYLDAPGVEVSAEAAADFALGLLLRAYSFDAYKTKKKSDDEKTPKKVDVTIVTAAHKDAEKASAVSEAIAGGVILARDLVNLPPNVLGPVEFAEKAEELRKLGVDVEILGEKELKKLGMNALLGVAQGSARPPRLAVMQWNGGSKKDEPIAFVGKGVVFDTGGISLKPGLGMEDMKGDMGGAAAVTGLMHVLAARKAKANVIGVIGLVENMPDGNAQRPGDIVTSMSGQTIEIINTDAEGRLVLADALWYTKDRFNPKFMINLATLTGAITVALGNLQAGLFSNDDELATRLAEAGEATAEKLWRMPLGKDYDKIIDSKFADMKNSSGRLAGSVTAAQFLKRFVGETPWAHLDIAGTAMGSPLTEINQSWGSGYGVRLLNELVRAHYED.

Lys263 and Asp268 together coordinate Mn(2+). The active site involves Lys275. Positions 286, 345, and 347 each coordinate Mn(2+). Residue Arg349 is part of the active site.

It belongs to the peptidase M17 family. It depends on Mn(2+) as a cofactor.

It is found in the cytoplasm. The catalysed reaction is Release of an N-terminal amino acid, Xaa-|-Yaa-, in which Xaa is preferably Leu, but may be other amino acids including Pro although not Arg or Lys, and Yaa may be Pro. Amino acid amides and methyl esters are also readily hydrolyzed, but rates on arylamides are exceedingly low.. The enzyme catalyses Release of an N-terminal amino acid, preferentially leucine, but not glutamic or aspartic acids.. Functionally, presumably involved in the processing and regular turnover of intracellular proteins. Catalyzes the removal of unsubstituted N-terminal amino acids from various peptides. This is Probable cytosol aminopeptidase from Agrobacterium fabrum (strain C58 / ATCC 33970) (Agrobacterium tumefaciens (strain C58)).